A 1135-amino-acid chain; its full sequence is Putative beta-hexosaminidase (1135 aa).

A signal peptide spans 1–23 (MKWVKSGVGILGILLTICHAVTS). Disordered stretches follow at residues 970 to 1082 (AHPP…LPGQ) and 1107 to 1135 (QMRG…QQAG). Pro residues predominate over residues 986–1003 (NMPPPFPPRPPFGPPMLP). Composition is skewed to low complexity over residues 1004–1026 (PGQM…TALG) and 1043–1073 (TGQA…LPGQ).

The protein belongs to the glycosyl hydrolase 20 family. In terms of tissue distribution, prismatic layer of shell (at protein level). Expressed primarily in the mantle with highest level in the mantle edge and lower level in the mantle pallium.

It localises to the secreted. It catalyses the reaction Hydrolysis of terminal non-reducing N-acetyl-D-hexosamine residues in N-acetyl-beta-D-hexosaminides.. Its pathway is glycan degradation; chitin degradation. In Margaritifera margaritifera (Freshwater pearl mussel), this protein is Putative beta-hexosaminidase.